The sequence spans 356 residues: Mannonate dehydratase (356 aa).

This sequence belongs to the mannonate dehydratase family. It depends on Fe(2+) as a cofactor. Requires Mn(2+) as cofactor.

The enzyme catalyses D-mannonate = 2-dehydro-3-deoxy-D-gluconate + H2O. It participates in carbohydrate metabolism; pentose and glucuronate interconversion. Catalyzes the dehydration of D-mannonate. In Levilactobacillus brevis (strain ATCC 367 / BCRC 12310 / CIP 105137 / JCM 1170 / LMG 11437 / NCIMB 947 / NCTC 947) (Lactobacillus brevis), this protein is Mannonate dehydratase.